A 160-amino-acid chain; its full sequence is uncharacterized protein (160 aa).

Basic and acidic residues predominate over residues 1–31 (METEKPNTDVKVAQDLEKLKLDEKHKDEKKD). The disordered stretch occupies residues 1 to 160 (METEKPNTDV…DKKDKEHKKE (160 aa)). A coiled-coil region spans residues 20 to 111 (KLDEKHKDEK…KSKLEGKKDK (92 aa)). Residues 32–42 (KKDKKDKKDKK) are compositionally biased toward basic residues. Basic and acidic residues predominate over residues 43-160 (DKKEKTPEEI…DKKDKEHKKE (118 aa)).

This is an uncharacterized protein from Dictyostelium discoideum (Social amoeba).